A 996-amino-acid chain; its full sequence is Leucine-rich repeat receptor-like kinase protein THICK TASSEL DWARF1 (996 aa).

An N-terminal signal peptide occupies residues 1–26 (MPPPTFLLGLLLLLLLAAAAPAPASA). 21 LRR repeats span residues 78-103 (TSRV…VALL), 104-127 (DALA…LASM), 128-151 (PALR…PPAA), 153-178 (FPAL…APHA), 180-201 (SLRY…TFGD), 202-226 (LAAL…LSRL), 251-275 (LQSL…LARL), 276-299 (SRLD…LGAL), 300-323 (TSLR…FAAL), 325-349 (NLKL…DFPF), 351-371 (EVLQ…LGRN), 372-395 (GRLK…LCAG), 397-419 (NLQL…LGDC), 420-443 (KTLT…LFDL), 445-466 (QANM…VIAG), 467-490 (DKIG…IGNL), 491-514 (PALQ…IGRL), 516-538 (NLTR…LMGC), 539-562 (ASLG…VTSL), 563-586 (KILC…MANM), and 587-611 (TSLT…QFLV). The helical transmembrane segment at 646 to 666 (KKLLVWLVVLLTLLVLAVLGA) threads the bilayer. Residues 703 to 978 (LKEDNIIGKG…TMREVVHMLS (276 aa)) form the Protein kinase domain. ATP-binding positions include 709–717 (IGKGGAGIV) and Lys731. Catalysis depends on Asp828, which acts as the Proton acceptor.

It belongs to the protein kinase superfamily. Ser/Thr protein kinase family. Highly expressed in the apex of the vegetative seedlings. Lower expression in young leaves, ears and tassels, embryos and roots. Not expressed in the shoot meristem itself. Detected in the three outermost layers of the inflorescence meristem, and on its flanks at positions of prospective spikelet pair meristems. Not confined to meristematic cells but also detected in primordia of glumes, lemmas and stamens.

The protein resides in the membrane. The enzyme catalyses L-seryl-[protein] + ATP = O-phospho-L-seryl-[protein] + ADP + H(+). The catalysed reaction is L-threonyl-[protein] + ATP = O-phospho-L-threonyl-[protein] + ADP + H(+). In terms of biological role, receptor-like kinase protein that regulates meristem size during inflorescence and flower development. Promotes vegetative meristem growth and restricts inflorescence and floral meristem growth. Based on additive and synergistic phenotypes of double mutants, it is probable that unlike CLV1 and CLV2 in A.thaliana, TD1 and FAE2 do not function exclusively in a single pathway. However, KN-1 and TD1 do function in a linear pathway to maintain vegetative meristem homeostasis, but they may interact with different partners during development. The polypeptide is Leucine-rich repeat receptor-like kinase protein THICK TASSEL DWARF1 (TD1) (Zea mays (Maize)).